Consider the following 217-residue polypeptide: uncharacterized protein (217 aa).

This is an uncharacterized protein from Haemophilus influenzae (strain ATCC 51907 / DSM 11121 / KW20 / Rd).